The chain runs to 449 residues: C4-dicarboxylate transport protein (449 aa).

8 consecutive transmembrane segments (helical) span residues proline 18–glycine 38, methionine 61–valine 81, valine 93–valine 113, phenylalanine 159–alanine 179, leucine 202–isoleucine 222, serine 244–leucine 264, glycine 311–alanine 331, and alanine 369–valine 389.

It belongs to the dicarboxylate/amino acid:cation symporter (DAACS) (TC 2.A.23) family.

The protein localises to the cell inner membrane. In terms of biological role, responsible for the transport of dicarboxylates such as succinate, fumarate, and malate from the periplasm across the membrane. This Xylella fastidiosa (strain M12) protein is C4-dicarboxylate transport protein.